The chain runs to 275 residues: Translation initiation factor 2 subunit alpha (275 aa).

The 72-residue stretch at 12-83 folds into the S1 motif domain; sequence GEFVVATVKN…EKGHIDLSLK (72 aa).

It belongs to the eIF-2-alpha family. In terms of assembly, heterotrimer composed of an alpha, a beta and a gamma chain.

Its function is as follows. eIF-2 functions in the early steps of protein synthesis by forming a ternary complex with GTP and initiator tRNA. This chain is Translation initiation factor 2 subunit alpha, found in Thermococcus kodakarensis (strain ATCC BAA-918 / JCM 12380 / KOD1) (Pyrococcus kodakaraensis (strain KOD1)).